We begin with the raw amino-acid sequence, 311 residues long: Putative S-adenosyl-L-methionine-dependent methyltransferase MUL_4761 (311 aa).

Residues Asp-132 and 161 to 162 (DL) contribute to the S-adenosyl-L-methionine site.

It belongs to the UPF0677 family.

Exhibits S-adenosyl-L-methionine-dependent methyltransferase activity. The chain is Putative S-adenosyl-L-methionine-dependent methyltransferase MUL_4761 from Mycobacterium ulcerans (strain Agy99).